The chain runs to 323 residues: Delta-aminolevulinic acid dehydratase (323 aa).

The Zn(2+) site is built by Cys118, Cys120, and Cys128. Lys195 (schiff-base intermediate with substrate) is an active-site residue. The 5-aminolevulinate site is built by Arg205 and Arg217. Glu233 contributes to the Mg(2+) binding site. Lys248 serves as the catalytic Schiff-base intermediate with substrate. Residues Ser274 and Tyr313 each coordinate 5-aminolevulinate.

It belongs to the ALAD family. Homooctamer. The cofactor is Zn(2+).

It carries out the reaction 2 5-aminolevulinate = porphobilinogen + 2 H2O + H(+). Its pathway is porphyrin-containing compound metabolism; protoporphyrin-IX biosynthesis; coproporphyrinogen-III from 5-aminolevulinate: step 1/4. Catalyzes an early step in the biosynthesis of tetrapyrroles. Binds two molecules of 5-aminolevulinate per subunit, each at a distinct site, and catalyzes their condensation to form porphobilinogen. The sequence is that of Delta-aminolevulinic acid dehydratase (hemB) from Staphylococcus aureus.